Here is a 179-residue protein sequence, read N- to C-terminus: Cytoglobin-2 (179 aa).

The region spanning 18-167 is the Globin domain; the sequence is PLSDAEMEII…VYWHVTGAYT (150 aa). Heme b is bound by residues His81 and His113.

It belongs to the globin family. In terms of assembly, monomeric.

The protein localises to the cytoplasm. Its subcellular location is the nucleus. The enzyme catalyses Fe(II)-heme b-[protein] + nitric oxide + O2 = Fe(III)-heme b-[protein] + nitrate. It carries out the reaction Fe(III)-heme b-[protein] + nitric oxide + H2O = Fe(II)-heme b-[protein] + nitrite + 2 H(+). The catalysed reaction is 2 superoxide + 2 H(+) = H2O2 + O2. It catalyses the reaction H2O2 + AH2 = A + 2 H2O. Probable multifunctional globin with a hexacoordinated heme iron required for the catalysis of various reactions depending on redox condition of the cell as well as oxygen availability. Has a nitric oxide dioxygenase (NOD) activity and is most probably involved in cell-mediated and oxygen-dependent nitric oxide consumption. Under normoxic conditions functions as a nitric oxide dioxygenase (NOD) but under hypoxic conditions the globin may switch its function to that of a nitrite (NO2) reductase (NiR), generating nitric oxide. Could also have peroxidase and superoxide dismutase activities, detoxifying reactive oxygen species and protecting cells against oxidative stress. Also binds dioxygen with low affinity and could function as an oxygen sensor but has probably no function as a respiratory oxygen carrier. This is Cytoglobin-2 from Oryzias latipes (Japanese rice fish).